The following is a 367-amino-acid chain: 2-aminoethylphosphonate--pyruvate transaminase (367 aa).

The residue at position 194 (lysine 194) is an N6-(pyridoxal phosphate)lysine.

It belongs to the class-V pyridoxal-phosphate-dependent aminotransferase family. PhnW subfamily. In terms of assembly, homodimer. The cofactor is pyridoxal 5'-phosphate.

It carries out the reaction (2-aminoethyl)phosphonate + pyruvate = phosphonoacetaldehyde + L-alanine. In terms of biological role, involved in phosphonate degradation. The polypeptide is 2-aminoethylphosphonate--pyruvate transaminase (Salmonella schwarzengrund (strain CVM19633)).